The chain runs to 444 residues: Phosphoribosylamine--glycine ligase (444 aa).

Residues 109 to 324 (RNLFKKYNIK…FLEVCEAIVN (216 aa)) enclose the ATP-grasp domain. Residue 140–202 (LTEKGIKAVV…EEKLEGVEFT (63 aa)) coordinates ATP. Mg(2+)-binding residues include Q282, E294, and N296. 3 residues coordinate Mn(2+): Q282, E294, and N296.

This sequence belongs to the GARS family. Mg(2+) is required as a cofactor. The cofactor is Mn(2+).

It catalyses the reaction 5-phospho-beta-D-ribosylamine + glycine + ATP = N(1)-(5-phospho-beta-D-ribosyl)glycinamide + ADP + phosphate + H(+). It participates in purine metabolism; IMP biosynthesis via de novo pathway; N(1)-(5-phospho-D-ribosyl)glycinamide from 5-phospho-alpha-D-ribose 1-diphosphate: step 2/2. The polypeptide is Phosphoribosylamine--glycine ligase (Methanocaldococcus jannaschii (strain ATCC 43067 / DSM 2661 / JAL-1 / JCM 10045 / NBRC 100440) (Methanococcus jannaschii)).